The sequence spans 113 residues: Large ribosomal subunit protein uL24 (113 aa).

This sequence belongs to the universal ribosomal protein uL24 family. As to quaternary structure, part of the 50S ribosomal subunit.

One of two assembly initiator proteins, it binds directly to the 5'-end of the 23S rRNA, where it nucleates assembly of the 50S subunit. Its function is as follows. One of the proteins that surrounds the polypeptide exit tunnel on the outside of the subunit. The polypeptide is Large ribosomal subunit protein uL24 (Chlamydia felis (strain Fe/C-56) (Chlamydophila felis)).